Here is a 545-residue protein sequence, read N- to C-terminus: ATP synthase subunit alpha (545 aa).

Residue 173–180 (GDRQTGKT) coordinates ATP.

This sequence belongs to the ATPase alpha/beta chains family. In terms of assembly, F-type ATPases have 2 components, CF(1) - the catalytic core - and CF(0) - the membrane proton channel. CF(1) has five subunits: alpha(3), beta(3), gamma(1), delta(1), epsilon(1). CF(0) has three main subunits: a(1), b(2) and c(9-12). The alpha and beta chains form an alternating ring which encloses part of the gamma chain. CF(1) is attached to CF(0) by a central stalk formed by the gamma and epsilon chains, while a peripheral stalk is formed by the delta and b chains.

Its subcellular location is the cell membrane. The enzyme catalyses ATP + H2O + 4 H(+)(in) = ADP + phosphate + 5 H(+)(out). Produces ATP from ADP in the presence of a proton gradient across the membrane. The alpha chain is a regulatory subunit. This chain is ATP synthase subunit alpha, found in Clavibacter michiganensis subsp. michiganensis (strain NCPPB 382).